The chain runs to 206 residues: Heat shock protein beta-1 (206 aa).

Arg12 is modified (omega-N-methylarginine). At Ser13 the chain carries Phosphoserine. Position 15 is a phosphoserine; by MAPKAPK2 and MAPKAPK3 (Ser15). Ser27 carries the post-translational modification Phosphoserine. Positions 74–206 (RPAFSRALNR…GPESEQSGAK (133 aa)) are interaction with TGFB1I1. The region spanning 80-188 (ALNRQLSSGV…QSAEITIPVT (109 aa)) is the sHSP domain. Phosphoserine; by MAPKAPK2, MAPKAPK3 and MAPKAPK5 is present on Ser86. A phosphoserine mark is found at Ser87, Ser90, and Ser102. Residue Lys127 is modified to N6-acetyllysine. Thr178 carries the phosphothreonine modification. Ser180 and Ser200 each carry phosphoserine.

This sequence belongs to the small heat shock protein (HSP20) family. Homooligomer. Homodimer; becomes monomeric upon activation. Heterooligomer; with HSPB6. Associates with alpha- and beta-tubulin. Interacts with TGFB1I1. Interacts with CRYAB. Interacts with HSPB8. Interacts with HSPBAP1. Phosphorylated upon exposure to protein kinase C activators and heat shock. Phosphorylation by MAPKAPK2 and MAPKAPK3 in response to stress dissociates HSPB1 from large small heat-shock protein (sHsps) oligomers and impairs its chaperone activity and ability to protect against oxidative stress effectively. Phosphorylation by MAPKAPK5 in response to PKA stimulation induces F-actin rearrangement. In terms of tissue distribution, expressed in a variety of tissues. High levels in lung, adrenal, xiphoid, adipose tissue, heart and striated and smooth muscle, lower levels in the CNS. Adult levels are much higher in the slow-twitch soleus muscle than in the fast-twitch rectus femoris and extensor digitorum muscles.

It localises to the cytoplasm. The protein resides in the nucleus. The protein localises to the cytoskeleton. Its subcellular location is the spindle. Small heat shock protein which functions as a molecular chaperone probably maintaining denatured proteins in a folding-competent state. Plays a role in stress resistance and actin organization. Through its molecular chaperone activity may regulate numerous biological processes including the phosphorylation and the axonal transport of neurofilament proteins. In Rattus norvegicus (Rat), this protein is Heat shock protein beta-1 (Hspb1).